The primary structure comprises 170 residues: Centrin-2 (170 aa).

Positions 1–21 are disordered; the sequence is MQRGALRGASPTARRRLVDRP. 4 consecutive EF-hand domains span residues 26–61, 62–97, 99–134, and 135–170; these read DEIE…LGFE, TKNP…KLGD, ESRE…LGET, and MSED…KTFP. Ca(2+) is bound by residues aspartate 39, aspartate 41, serine 43, methionine 45, and glutamate 50.

It belongs to the centrin family. Monomer. Does not homooligomerize.

It localises to the cytoplasm. It is found in the cytoskeleton. Its subcellular location is the microtubule organizing center. The protein localises to the centrosome. In terms of biological role, in tachyzoites, plays an essential role in microneme secretion that ensures parasite motility and attachment to, invasion of and egress from host cells. Also involved in the architecture of the peripheral annuli where it appears to regulate the localization of PAP2. In association with the myosin motor MyoJ, involved in the constriction of the basal complex at the end of daughter cell division in an actin-dependent manner; the basal complex is a cytoskeletal structure formed at the tachyzoite basal pole during daughter cell formation. May be involved in parasite replication. This chain is Centrin-2, found in Toxoplasma gondii (strain ATCC 50611 / Me49).